A 574-amino-acid chain; its full sequence is Proline--tRNA ligase (574 aa).

Belongs to the class-II aminoacyl-tRNA synthetase family. ProS type 1 subfamily. In terms of assembly, homodimer.

The protein localises to the cytoplasm. It catalyses the reaction tRNA(Pro) + L-proline + ATP = L-prolyl-tRNA(Pro) + AMP + diphosphate. Catalyzes the attachment of proline to tRNA(Pro) in a two-step reaction: proline is first activated by ATP to form Pro-AMP and then transferred to the acceptor end of tRNA(Pro). As ProRS can inadvertently accommodate and process non-cognate amino acids such as alanine and cysteine, to avoid such errors it has two additional distinct editing activities against alanine. One activity is designated as 'pretransfer' editing and involves the tRNA(Pro)-independent hydrolysis of activated Ala-AMP. The other activity is designated 'posttransfer' editing and involves deacylation of mischarged Ala-tRNA(Pro). The misacylated Cys-tRNA(Pro) is not edited by ProRS. The chain is Proline--tRNA ligase from Sodalis glossinidius (strain morsitans).